The following is a 384-amino-acid chain: S-adenosylmethionine synthase (384 aa).

Residue His-15 participates in ATP binding. Asp-17 provides a ligand contact to Mg(2+). Glu-43 is a binding site for K(+). Residues Glu-56 and Gln-99 each coordinate L-methionine. A flexible loop region spans residues 99–109; sequence QSPDINQGVDR. ATP is bound by residues 164–166, 230–231, Asp-239, 245–246, Ala-262, and Lys-266; these read DAK, RF, and RK. Asp-239 lines the L-methionine pocket. An L-methionine-binding site is contributed by Lys-270.

This sequence belongs to the AdoMet synthase family. Homotetramer; dimer of dimers. Mg(2+) is required as a cofactor. Requires K(+) as cofactor.

It localises to the cytoplasm. It carries out the reaction L-methionine + ATP + H2O = S-adenosyl-L-methionine + phosphate + diphosphate. It participates in amino-acid biosynthesis; S-adenosyl-L-methionine biosynthesis; S-adenosyl-L-methionine from L-methionine: step 1/1. Catalyzes the formation of S-adenosylmethionine (AdoMet) from methionine and ATP. The overall synthetic reaction is composed of two sequential steps, AdoMet formation and the subsequent tripolyphosphate hydrolysis which occurs prior to release of AdoMet from the enzyme. The protein is S-adenosylmethionine synthase of Escherichia coli (strain K12 / DH10B).